Here is a 601-residue protein sequence, read N- to C-terminus: Zinc finger CCCH domain-containing protein 33 (601 aa).

2 ANK repeats span residues 71-101 (ERRT…EAAR) and 106-138 (DGAT…SVDA). Low complexity predominate over residues 167 to 180 (PAVSPSSSPKKSAS). Positions 167 to 203 (PAVSPSSSPKKSASPPSPPPPQEAKKEYPPDLTLPDL) are disordered. 2 C3H1-type zinc fingers span residues 252–280 (SYSC…HGVF) and 288–312 (QYRT…HKPD).

The protein is Zinc finger CCCH domain-containing protein 33 of Oryza sativa subsp. japonica (Rice).